The sequence spans 888 residues: Kinesin-like protein KIF20A (888 aa).

An N-acetylserine modification is found at Ser2. Phosphoserine occurs at positions 7, 14, and 21. A Kinesin motor domain is found at Lys63–Leu506. Gly159–Thr166 is an ATP binding site. Ser527 bears the Phosphoserine; by PLK1 mark. Ser531 is modified (phosphoserine). Coiled coils occupy residues Lys559–Leu587 and Glu630–Cys760. Ser667, Ser683, and Ser823 each carry phosphoserine. The interval Cys761 to Tyr888 is globular. A disordered region spans residues Ser823–Asp863. At Thr855 the chain carries Phosphothreonine. Residues Ser865, Ser876, and Ser881 each carry the phosphoserine modification.

The protein belongs to the TRAFAC class myosin-kinesin ATPase superfamily. Kinesin family. Post-translationally, phosphorylated by PLK1 at Ser-527 during mitosis, creating a docking site for PLK1 and recruiting PLK1 at central spindle.

It is found in the golgi apparatus. The protein localises to the cytoplasm. It localises to the cytoskeleton. Its subcellular location is the spindle. Its function is as follows. Mitotic kinesin required for chromosome passenger complex (CPC)-mediated cytokinesis. Following phosphorylation by PLK1, involved in recruitment of PLK1 to the central spindle. Interacts with guanosine triphosphate (GTP)-bound forms of RAB6A and RAB6B. May act as a motor required for the retrograde RAB6 regulated transport of Golgi membranes and associated vesicles along microtubules. Has a microtubule plus end-directed motility. In Bos taurus (Bovine), this protein is Kinesin-like protein KIF20A (KIF20A).